Here is a 541-residue protein sequence, read N- to C-terminus: Chaperonin GroEL 2 (541 aa).

ATP contacts are provided by residues 29–32 (TLGP) and 86–90 (DGTTT). Residue lysine 132 forms an Isoglutamyl lysine isopeptide (Lys-Gln) (interchain with Q-Cter in protein Pup) linkage. ATP-binding positions include glycine 413, 476 to 478 (NAA), and aspartate 492.

It belongs to the chaperonin (HSP60) family. In terms of assembly, forms a cylinder of 14 subunits composed of two heptameric rings stacked back-to-back. Interacts with the co-chaperonin GroES.

It localises to the secreted. The protein localises to the capsule. It is found in the cell surface. Its subcellular location is the cell wall. It carries out the reaction ATP + H2O + a folded polypeptide = ADP + phosphate + an unfolded polypeptide.. Functionally, together with its co-chaperonin GroES, plays an essential role in assisting protein folding. The GroEL-GroES system forms a nano-cage that allows encapsulation of the non-native substrate proteins and provides a physical environment optimized to promote and accelerate protein folding. This is Chaperonin GroEL 2 from Mycolicibacterium smegmatis (strain ATCC 700084 / mc(2)155) (Mycobacterium smegmatis).